The sequence spans 147 residues: Hemoglobin subunit beta (147 aa).

Position 2 is an N-acetylvaline (valine 2). One can recognise a Globin domain in the interval 3 to 147; sequence HLTGEEKSAV…VANALAHKYH (145 aa). A Phosphothreonine modification is found at threonine 13. Serine 45 carries the post-translational modification Phosphoserine. Lysine 60 is modified (N6-acetyllysine). Heme b is bound at residue histidine 64. At lysine 83 the chain carries N6-acetyllysine. Residue histidine 93 participates in heme b binding. Cysteine 94 is subject to S-nitrosocysteine. An N6-acetyllysine modification is found at lysine 145.

Belongs to the globin family. Heterotetramer of two alpha chains and two beta chains. In terms of tissue distribution, red blood cells.

In terms of biological role, involved in oxygen transport from the lung to the various peripheral tissues. This chain is Hemoglobin subunit beta (HBB), found in Ateles paniscus (Black spider monkey).